A 1377-amino-acid polypeptide reads, in one-letter code: Clustered mitochondria protein homolog (1377 aa).

Positions Met-1 to Glu-61 are disordered. In terms of domain architecture, Clu spans Arg-353–Leu-595. The stretch at Val-519–Ser-552 is one TPR 1 repeat. Disordered regions lie at residues Asn-651–Val-700 and Asp-886–Phe-917. The segment covering Gln-655–Pro-690 has biased composition (basic and acidic residues). Positions Asp-886 to Lys-896 are enriched in polar residues. 3 TPR repeats span residues Ala-1022 to Val-1055, Ala-1148 to Tyr-1181, and Gly-1183 to Thr-1216. Positions Lys-1310–Ser-1377 are disordered. Low complexity predominate over residues Ala-1364–Ser-1377.

This sequence belongs to the CLU family.

The protein resides in the cytoplasm. MRNA-binding protein involved in proper cytoplasmic distribution of mitochondria. The chain is Clustered mitochondria protein homolog from Culex quinquefasciatus (Southern house mosquito).